We begin with the raw amino-acid sequence, 204 residues long: Phosphoribosyl-dephospho-CoA transferase (204 aa).

Residues Asp-129 and Asp-131 contribute to the active site.

The protein belongs to the MdcG family.

It catalyses the reaction apo-[malonate decarboxylase ACP] + 2'-(5''-triphospho-alpha-D-ribosyl)-3'-dephospho-CoA = holo-[malonate decarboxylase ACP] + diphosphate. Its function is as follows. Transfers 2'-(5-triphosphoribosyl)-3'-dephosphocoenzyme-A to the apo-[acyl-carrier-protein] of the malonate decarboxylase to yield holo-[acyl-carrier-protein]. This Pseudomonas putida (Arthrobacter siderocapsulatus) protein is Phosphoribosyl-dephospho-CoA transferase.